The sequence spans 182 residues: Ribosome hibernation promotion factor (182 aa).

It belongs to the HPF/YfiA ribosome-associated protein family. Long HPF subfamily. In terms of assembly, interacts with 100S ribosomes.

The protein resides in the cytoplasm. Required for dimerization of active 70S ribosomes into 100S ribosomes in stationary phase; 100S ribosomes are translationally inactive and sometimes present during exponential growth. The sequence is that of Ribosome hibernation promotion factor from Streptococcus pyogenes serotype M6 (strain ATCC BAA-946 / MGAS10394).